Here is a 506-residue protein sequence, read N- to C-terminus: Alpha-ketoglutarate-dependent dioxygenase FTO (506 aa).

Threonine 4 bears the Phosphothreonine mark. The fe2OG dioxygenase domain stretch occupies residues 32–326 (TPKDDEFYQQ…SSTHRVAECS (295 aa)). Substrate is bound by residues arginine 96 and tyrosine 108. Asparagine 204 contacts 2-oxoglutarate. The interval 212 to 223 (PYLKEEPYFGMG) is loop L1; predicted to block binding of double-stranded DNA or RNA. The residue at position 215 (lysine 215) is an N6-acetyllysine. Positions 230 and 232 each coordinate Fe cation. 230 to 233 (HHDE) serves as a coordination point for substrate. Position 294 (tyrosine 294) interacts with 2-oxoglutarate. Histidine 306 contributes to the Fe cation binding site. Residues 315–317 (RFS), threonine 319, and arginine 321 each bind 2-oxoglutarate.

This sequence belongs to the fto family. Monomer. May also exist as homodimer. It depends on Fe(2+) as a cofactor.

Its subcellular location is the nucleus. The protein resides in the nucleus speckle. It is found in the cytoplasm. The enzyme catalyses a 5'-end (N(7)-methyl 5'-triphosphoguanosine)-(N(6),2'-O-dimethyladenosine) in mRNA + 2-oxoglutarate + O2 = a 5'-end (N(7)-methyl 5'-triphosphoguanosine)-(2'-O-methyladenosine) in mRNA + formaldehyde + succinate + CO2. It carries out the reaction an N(6)-methyladenosine in mRNA + 2-oxoglutarate + O2 = an adenosine in mRNA + formaldehyde + succinate + CO2. The catalysed reaction is N(6)-methyladenosine in U6 snRNA + 2-oxoglutarate + O2 = adenosine in U6 snRNA + formaldehyde + succinate + CO2. It catalyses the reaction a 5'-end (N(7)-methyl 5'-triphosphoguanosine)-(N(6),2'-O-dimethyladenosine) in U6 snRNA + 2-oxoglutarate + O2 = a 5'-end (N(7)-methyl 5'-triphosphoguanosine)-(2'-O-methyladenosine) in U6 snRNA + formaldehyde + succinate + CO2. The enzyme catalyses an N(1)-methyladenosine in tRNA + 2-oxoglutarate + O2 = an adenosine in tRNA + formaldehyde + succinate + CO2. Functionally, RNA demethylase that mediates oxidative demethylation of different RNA species, such as mRNAs, tRNAs and snRNAs, and acts as a regulator of fat mass, adipogenesis and energy homeostasis. Specifically demethylates N(6)-methyladenosine (m6A) RNA, the most prevalent internal modification of messenger RNA (mRNA) in higher eukaryotes. M6A demethylation by FTO affects mRNA expression and stability. Also able to demethylate m6A in U6 small nuclear RNA (snRNA). Mediates demethylation of N(6),2'-O-dimethyladenosine cap (m6A(m)), by demethylating the N(6)-methyladenosine at the second transcribed position of mRNAs and U6 snRNA. Demethylation of m6A(m) in the 5'-cap by FTO affects mRNA stability by promoting susceptibility to decapping. Also acts as a tRNA demethylase by removing N(1)-methyladenine from various tRNAs. Has no activity towards 1-methylguanine. Has no detectable activity towards double-stranded DNA. Also able to repair alkylated DNA and RNA by oxidative demethylation: demethylates single-stranded RNA containing 3-methyluracil, single-stranded DNA containing 3-methylthymine and has low demethylase activity towards single-stranded DNA containing 1-methyladenine or 3-methylcytosine. Ability to repair alkylated DNA and RNA is however unsure in vivo. Involved in the regulation of fat mass, adipogenesis and body weight, thereby contributing to the regulation of body size and body fat accumulation. Involved in the regulation of thermogenesis and the control of adipocyte differentiation into brown or white fat cells. Regulates activity of the dopaminergic midbrain circuitry via its ability to demethylate m6A in mRNAs. Plays an oncogenic role in a number of acute myeloid leukemias by enhancing leukemic oncogene-mediated cell transformation: acts by mediating m6A demethylation of target transcripts such as MYC, CEBPA, ASB2 and RARA, leading to promote their expression. In Canis lupus familiaris (Dog), this protein is Alpha-ketoglutarate-dependent dioxygenase FTO (FTO).